The primary structure comprises 342 residues: Autoinducer 2 import system permease protein LsrC (342 aa).

Topologically, residues 1 to 13 (MLKFIQNNREITA) are periplasmic. A helical transmembrane segment spans residues 14–34 (LLAVVLLFVLPGFLDRQYLSV). Over 35–38 (QTLT) the chain is Cytoplasmic. A helical transmembrane segment spans residues 39–59 (MVYSSAQILILLAMGATLVML). At 60 to 69 (TRNIDVSVGS) the chain is on the periplasmic side. A helical membrane pass occupies residues 70-90 (ITGMCAVLLGMLLNAGYSLPV). The Cytoplasmic portion of the chain corresponds to 91-92 (AC). A helical transmembrane segment spans residues 93–113 (VATLLLGLLAGFFNGALVAWL). A topological domain (periplasmic) is located at residue Lys-114. Residues 115–135 (IPAIVATLGTLGLYRGIMLLW) form a helical membrane-spanning segment. Residues 136–154 (TGGKWIEGLPAELKQLSAP) lie on the Cytoplasmic side of the membrane. Residues 155 to 175 (LLLGISAIGWLTIILVAFMAW) traverse the membrane as a helical segment. The Periplasmic segment spans residues 176 to 212 (LLAKTAFGRSFYATGDNLQGARQLGVRTEAIRIVAFS). The chain crosses the membrane as a helical span at residues 213 to 233 (LNGCMAALAGIVFASQIGFIL). Over 234 to 251 (NQTGTGLEMKAIAACVLG) the chain is Cytoplasmic. A helical transmembrane segment spans residues 252–272 (GISLLGGSGAIIGAVLGAWFL). Residues 273 to 283 (TQIDSVLVLLR) are Periplasmic-facing. Residues 284–304 (IPAWWNDFIAGLVLLAVLVFD) form a helical membrane-spanning segment. Over 305–342 (GRLRCALERNLRRQKYARFMTPPPSVKPASSGKKREAA) the chain is Cytoplasmic.

This sequence belongs to the binding-protein-dependent transport system permease family. AraH/RbsC subfamily. As to quaternary structure, the complex is composed of two ATP-binding proteins (LsrA), two transmembrane proteins (LsrC and LsrD) and a solute-binding protein (LsrB).

It is found in the cell inner membrane. Its function is as follows. Part of the ABC transporter complex LsrABCD involved in autoinducer 2 (AI-2) import. Probably responsible for the translocation of the substrate across the membrane. This chain is Autoinducer 2 import system permease protein LsrC (lsrC), found in Shigella flexneri.